The following is a 389-amino-acid chain: 1-deoxy-D-xylulose 5-phosphate reductoisomerase (389 aa).

6 residues coordinate NADPH: Ser-11, Gly-12, Ser-13, Val-14, Asn-39, and Asn-122. Lys-123 contributes to the 1-deoxy-D-xylulose 5-phosphate binding site. NADPH is bound at residue Glu-124. Asp-148 contacts Mn(2+). Positions 149, 150, 174, and 197 each coordinate 1-deoxy-D-xylulose 5-phosphate. Glu-150 contacts Mn(2+). Gly-203 serves as a coordination point for NADPH. 1-deoxy-D-xylulose 5-phosphate contacts are provided by Ser-210, Asn-215, Lys-216, and Glu-219. Glu-219 serves as a coordination point for Mn(2+).

The protein belongs to the DXR family. Requires Mg(2+) as cofactor. Mn(2+) serves as cofactor.

It carries out the reaction 2-C-methyl-D-erythritol 4-phosphate + NADP(+) = 1-deoxy-D-xylulose 5-phosphate + NADPH + H(+). It participates in isoprenoid biosynthesis; isopentenyl diphosphate biosynthesis via DXP pathway; isopentenyl diphosphate from 1-deoxy-D-xylulose 5-phosphate: step 1/6. Functionally, catalyzes the NADPH-dependent rearrangement and reduction of 1-deoxy-D-xylulose-5-phosphate (DXP) to 2-C-methyl-D-erythritol 4-phosphate (MEP). This is 1-deoxy-D-xylulose 5-phosphate reductoisomerase from Leptospira interrogans serogroup Icterohaemorrhagiae serovar copenhageni (strain Fiocruz L1-130).